The chain runs to 104 residues: Nucleoid-associated protein DICTH_1981 (104 aa).

Residues K85–F104 are disordered.

The protein belongs to the YbaB/EbfC family. In terms of assembly, homodimer.

The protein localises to the cytoplasm. Its subcellular location is the nucleoid. In terms of biological role, binds to DNA and alters its conformation. May be involved in regulation of gene expression, nucleoid organization and DNA protection. This Dictyoglomus thermophilum (strain ATCC 35947 / DSM 3960 / H-6-12) protein is Nucleoid-associated protein DICTH_1981.